Consider the following 605-residue polypeptide: Ras guanine nucleotide exchange factor A (605 aa).

Residues 67–99 (DKTAIIQLILQHLSTKGLKQTKQTLEKEARTTT) form the LisH domain. The region spanning 198–320 (DDEVVKFASL…SLTKMVEKLS (123 aa)) is the N-terminal Ras-GEF domain. Residues 353 to 597 (DEEEIARQLT…YRESLKREPK (245 aa)) enclose the Ras-GEF domain.

Component of the Sca1 complex composed of at least gefA, gefH, scaA, phr, and the protein phosphatase 2A subunits pppA and pho2B. Interacts directly with gefH.

The protein localises to the cell membrane. Functionally, ras-bound GDP/GTP exchange factor required for normal activation of adenylyl cyclase. Component of the Sca1 complex, a regulator of cell motility, chemotaxis and signal relay. The Sca1 complex is recruited to the plasma membrane in a chemoattractant- and F-actin-dependent manner and is enriched at the leading edge of chemotaxing cells where it regulates F-actin dynamics and signal relay by controlling the activation of rasC and the downstream target of rapamycin complex 2 (TORC2)-Akt/protein kinase B (PKB) pathway. The protein is Ras guanine nucleotide exchange factor A (gefA) of Dictyostelium discoideum (Social amoeba).